Here is a 289-residue protein sequence, read N- to C-terminus: ATP synthase gamma chain (289 aa).

Belongs to the ATPase gamma chain family. As to quaternary structure, F-type ATPases have 2 components, CF(1) - the catalytic core - and CF(0) - the membrane proton channel. CF(1) has five subunits: alpha(3), beta(3), gamma(1), delta(1), epsilon(1). CF(0) has three main subunits: a, b and c.

The protein localises to the cell inner membrane. Produces ATP from ADP in the presence of a proton gradient across the membrane. The gamma chain is believed to be important in regulating ATPase activity and the flow of protons through the CF(0) complex. The polypeptide is ATP synthase gamma chain (Coxiella burnetii (strain CbuK_Q154) (Coxiella burnetii (strain Q154))).